Reading from the N-terminus, the 945-residue chain is Isoleucine--tRNA ligase (945 aa).

Positions 66–76 match the 'HIGH' region motif; the sequence is PYANGDIHLGH. Glutamate 581 contacts L-isoleucyl-5'-AMP. Residues 622 to 626 carry the 'KMSKS' region motif; it reads KMSKS. Residue lysine 625 participates in ATP binding. Residues cysteine 908, cysteine 911, cysteine 928, and cysteine 931 each coordinate Zn(2+).

The protein belongs to the class-I aminoacyl-tRNA synthetase family. IleS type 1 subfamily. In terms of assembly, monomer. The cofactor is Zn(2+).

Its subcellular location is the cytoplasm. It carries out the reaction tRNA(Ile) + L-isoleucine + ATP = L-isoleucyl-tRNA(Ile) + AMP + diphosphate. In terms of biological role, catalyzes the attachment of isoleucine to tRNA(Ile). As IleRS can inadvertently accommodate and process structurally similar amino acids such as valine, to avoid such errors it has two additional distinct tRNA(Ile)-dependent editing activities. One activity is designated as 'pretransfer' editing and involves the hydrolysis of activated Val-AMP. The other activity is designated 'posttransfer' editing and involves deacylation of mischarged Val-tRNA(Ile). In Paraburkholderia phymatum (strain DSM 17167 / CIP 108236 / LMG 21445 / STM815) (Burkholderia phymatum), this protein is Isoleucine--tRNA ligase.